The primary structure comprises 127 residues: Large ribosomal subunit protein bL12 (127 aa).

This sequence belongs to the bacterial ribosomal protein bL12 family. In terms of assembly, homodimer. Part of the ribosomal stalk of the 50S ribosomal subunit. Forms a multimeric L10(L12)X complex, where L10 forms an elongated spine to which 2 to 4 L12 dimers bind in a sequential fashion. Binds GTP-bound translation factors.

Its function is as follows. Forms part of the ribosomal stalk which helps the ribosome interact with GTP-bound translation factors. Is thus essential for accurate translation. This Leptospira interrogans serogroup Icterohaemorrhagiae serovar copenhageni (strain Fiocruz L1-130) protein is Large ribosomal subunit protein bL12.